Consider the following 141-residue polypeptide: Probable trafficking protein particle complex subunit 2 (141 aa).

Belongs to the TRAPP small subunits family. Sedlin subfamily. In terms of assembly, part of the multisubunit TRAPP (transport protein particle) complex.

It localises to the cytoplasm. The protein resides in the perinuclear region. It is found in the endoplasmic reticulum. The protein localises to the golgi apparatus. In terms of biological role, may play a role in vesicular transport from endoplasmic reticulum to Golgi. Required for the systemic spread of the RNAi response. This chain is Probable trafficking protein particle complex subunit 2 (sedl-1), found in Caenorhabditis elegans.